We begin with the raw amino-acid sequence, 365 residues long: Peptide chain release factor 2 (365 aa).

N5-methylglutamine is present on glutamine 252.

This sequence belongs to the prokaryotic/mitochondrial release factor family. In terms of processing, methylated by PrmC. Methylation increases the termination efficiency of RF2.

The protein localises to the cytoplasm. Functionally, peptide chain release factor 2 directs the termination of translation in response to the peptide chain termination codons UGA and UAA. The protein is Peptide chain release factor 2 of Escherichia coli (strain K12 / MC4100 / BW2952).